The sequence spans 187 residues: UPF0301 protein SG2023 (187 aa).

Belongs to the UPF0301 (AlgH) family.

The sequence is that of UPF0301 protein SG2023 from Sodalis glossinidius (strain morsitans).